The sequence spans 190 residues: dTTP/UTP pyrophosphatase (190 aa).

D68 (proton acceptor) is an active-site residue.

It belongs to the Maf family. YhdE subfamily. A divalent metal cation is required as a cofactor.

It localises to the cytoplasm. It carries out the reaction dTTP + H2O = dTMP + diphosphate + H(+). It catalyses the reaction UTP + H2O = UMP + diphosphate + H(+). Nucleoside triphosphate pyrophosphatase that hydrolyzes dTTP and UTP. May have a dual role in cell division arrest and in preventing the incorporation of modified nucleotides into cellular nucleic acids. This chain is dTTP/UTP pyrophosphatase, found in Pyrococcus furiosus (strain ATCC 43587 / DSM 3638 / JCM 8422 / Vc1).